A 329-amino-acid chain; its full sequence is MPLIPEEPLLASSPDRFCMFPIQYPQIWEMYKKALASFWTAEEVDLSSDTRHWETLTPGERHFITHVLAFFAASDGIVLENLAGRFMKEVQVAEARAFYGFQIAIENIHSEMYSLLLESYIKDSDEKSRLFRAVETNPCVEKKAKWALRWIDGSETFAERLVAFACVEGIFFSGSFCAIFWLKKRGLMPGLTFSNELISRDEGLHCDFACLLYSLLRTKLTEERVKGIVADAVEIEREFVCDALPCALVGMNGDLMSKYIEFVADRLLDALGYDKLYNAQNPFDWMELISLQGKTNFFEKRVGEYQKASVMSSLNGNGATHEFKLDEDF.

Fe cation is bound by residues Asp75, Glu106, and His109. Tyr113 is a catalytic residue. Residues Glu168, Glu202, and His205 each coordinate Fe cation.

Belongs to the ribonucleoside diphosphate reductase small chain family. Heterodimer of a large and a small chain. Fe cation serves as cofactor.

It localises to the cytoplasm. The enzyme catalyses a 2'-deoxyribonucleoside 5'-diphosphate + [thioredoxin]-disulfide + H2O = a ribonucleoside 5'-diphosphate + [thioredoxin]-dithiol. Provides the precursors necessary for DNA synthesis. Catalyzes the biosynthesis of deoxyribonucleotides from the corresponding ribonucleotides. The polypeptide is Ribonucleoside-diphosphate reductase small chain (Nicotiana tabacum (Common tobacco)).